Here is a 286-residue protein sequence, read N- to C-terminus: MSIDFTPDPQLYPFESRWFDSSRGRIHYVDEGTGPPILLCHGNPTWSFLYRDIIVALRDRFRCVAPDYLGFGLSERPSGFGYQIDEHARVIGEFVDHLGLDRYLSMGQDWGGPISMAVAVERADRVRGVVLGNTWFWPADTLAMKAFSRVMSSPPVQYAILRRNFFVERLIPAGTEHRPSSAVMAHYRAVQPNAAARRGVAEMPKQILAARPLLARLAREVPATLGTKPTLLIWGMKDVAFRPKTIIPRLSATFPDHVLVELPNAKHFIQEDAPDRIAAAIIERFG.

The AB hydrolase-1 domain maps to 35-134 (PPILLCHGNP…RVRGVVLGNT (100 aa)). The active-site Nucleophile is the Asp109. Asp238 (proton donor) is an active-site residue. His267 (proton acceptor) is an active-site residue.

This sequence belongs to the haloalkane dehalogenase family. Type 1 subfamily. In terms of assembly, monomer.

The enzyme catalyses 1-haloalkane + H2O = a halide anion + a primary alcohol + H(+). Its function is as follows. Catalyzes hydrolytic cleavage of carbon-halogen bonds in halogenated aliphatic compounds, leading to the formation of the corresponding primary alcohols, halide ions and protons. This is Haloalkane dehalogenase 2 (dhmA2) from Mycobacterium bovis (strain ATCC BAA-935 / AF2122/97).